We begin with the raw amino-acid sequence, 1687 residues long: Vitellogenin-2 (1687 aa).

Positions 1 to 15 (MRVLVLALTVALVAG) are cleaved as a signal peptide. In terms of domain architecture, Vitellogenin spans 24–663 (FAPGKTYEYK…DAATVLPKNI (640 aa)). Asparagine 941, asparagine 945, asparagine 954, asparagine 1004, asparagine 1019, and asparagine 1083 each carry an N-linked (GlcNAc...) asparagine glycan. Residues 1081–1174 (LKNSTKASSS…SSSSSKTKWQ (94 aa)) are disordered. Low complexity predominate over residues 1088–1127 (SSSSSGSSRSSRSRSSSSSSSSSSSSSSRSSSSSSRSSSS). Asparagine 1142 carries an N-linked (GlcNAc...) asparagine glycan. A compositionally biased stretch (low complexity) spans 1148–1169 (SSSSSSSSSSSSSSSSSSSSSS). 7 N-linked (GlcNAc...) asparagine glycosylation sites follow: asparagine 1179, asparagine 1257, asparagine 1292, asparagine 1342, asparagine 1361, asparagine 1366, and asparagine 1390. Residues 1417-1593 (AECTVVEDTV…SWVLPAKSCR (177 aa)) form the VWFD domain. Disulfide bonds link cysteine 1419/cysteine 1556 and cysteine 1442/cysteine 1592. Residues asparagine 1577 and asparagine 1655 are each glycosylated (N-linked (GlcNAc...) asparagine).

Post-translationally, phosvitin, an egg yolk storage protein, is one of the most highly phosphorylated (10%) proteins in nature. In terms of tissue distribution, produced by the liver, secreted into the blood and then sequestered by receptor mediated endocytosis into growing oocytes, where it is generally cleaved, giving rise to the respective yolk components lipovitellins and phosvitin.

Its function is as follows. Precursor of the egg-yolk proteins that are sources of nutrients during early development of oviparous organisms. The polypeptide is Vitellogenin-2 (Fundulus heteroclitus (Killifish)).